Reading from the N-terminus, the 336-residue chain is Holliday junction branch migration complex subunit RuvB (336 aa).

Residues alanine 4–tyrosine 184 are large ATPase domain (RuvB-L). Residues isoleucine 23, arginine 24, glycine 65, lysine 68, threonine 69, threonine 70, glutamate 131–tyrosine 133, arginine 174, tyrosine 184, and arginine 221 each bind ATP. A Mg(2+)-binding site is contributed by threonine 69. The small ATPAse domain (RuvB-S) stretch occupies residues glutamine 185–asparagine 255. The segment at alanine 258–proline 336 is head domain (RuvB-H). The DNA site is built by arginine 294, arginine 313, and arginine 318.

It belongs to the RuvB family. In terms of assembly, homohexamer. Forms an RuvA(8)-RuvB(12)-Holliday junction (HJ) complex. HJ DNA is sandwiched between 2 RuvA tetramers; dsDNA enters through RuvA and exits via RuvB. An RuvB hexamer assembles on each DNA strand where it exits the tetramer. Each RuvB hexamer is contacted by two RuvA subunits (via domain III) on 2 adjacent RuvB subunits; this complex drives branch migration. In the full resolvosome a probable DNA-RuvA(4)-RuvB(12)-RuvC(2) complex forms which resolves the HJ.

It localises to the cytoplasm. It catalyses the reaction ATP + H2O = ADP + phosphate + H(+). The RuvA-RuvB-RuvC complex processes Holliday junction (HJ) DNA during genetic recombination and DNA repair, while the RuvA-RuvB complex plays an important role in the rescue of blocked DNA replication forks via replication fork reversal (RFR). RuvA specifically binds to HJ cruciform DNA, conferring on it an open structure. The RuvB hexamer acts as an ATP-dependent pump, pulling dsDNA into and through the RuvAB complex. RuvB forms 2 homohexamers on either side of HJ DNA bound by 1 or 2 RuvA tetramers; 4 subunits per hexamer contact DNA at a time. Coordinated motions by a converter formed by DNA-disengaged RuvB subunits stimulates ATP hydrolysis and nucleotide exchange. Immobilization of the converter enables RuvB to convert the ATP-contained energy into a lever motion, pulling 2 nucleotides of DNA out of the RuvA tetramer per ATP hydrolyzed, thus driving DNA branch migration. The RuvB motors rotate together with the DNA substrate, which together with the progressing nucleotide cycle form the mechanistic basis for DNA recombination by continuous HJ branch migration. Branch migration allows RuvC to scan DNA until it finds its consensus sequence, where it cleaves and resolves cruciform DNA. The sequence is that of Holliday junction branch migration complex subunit RuvB from Salmonella choleraesuis (strain SC-B67).